The sequence spans 434 residues: Guanosine-inosine kinase (434 aa).

Residues 40 to 45 (DQTLVD), 93 to 97 (GTIGN), and Arg198 contribute to the GMP site. ATP is bound by residues 284–289 (TAGPIG), Gly357, and Asn402.

Belongs to the carbohydrate kinase PfkB family. Mg(2+) is required as a cofactor.

The catalysed reaction is guanosine + ATP = GMP + ADP + H(+). The enzyme catalyses inosine + ATP = IMP + ADP + H(+). The protein operates within purine metabolism; IMP biosynthesis via salvage pathway; IMP from inosine: step 1/1. It functions in the pathway purine metabolism; GMP biosynthesis via salvage pathway. In terms of biological role, catalyzes the phosphorylation of guanosine and inosine to GMP and IMP, respectively. The protein is Guanosine-inosine kinase of Escherichia coli O157:H7.